A 282-amino-acid chain; its full sequence is Phosphatidylglycerol--prolipoprotein diacylglyceryl transferase (282 aa).

The next 4 membrane-spanning stretches (helical) occupy residues 19-39 (IGPITIRWYGLLIATAVLIGV), 59-79 (LSIWLVIGAIPAARIYYVLFQ), 90-110 (IIAIWQGGIAIHGAIIGGTLA), and 120-140 (VPFWQLADLVAPSLILGQAIG). R141 lines the a 1,2-diacyl-sn-glycero-3-phospho-(1'-sn-glycerol) pocket. 3 helical membrane-spanning segments follow: residues 181-201 (TFLYESIWDLMVFALLITLFF), 212-232 (VGTLFMVYLATYSLGRLWIEG), and 245-265 (IAQVVSLTGITLGLAGLAWLY).

The protein belongs to the Lgt family.

It is found in the cell inner membrane. The enzyme catalyses L-cysteinyl-[prolipoprotein] + a 1,2-diacyl-sn-glycero-3-phospho-(1'-sn-glycerol) = an S-1,2-diacyl-sn-glyceryl-L-cysteinyl-[prolipoprotein] + sn-glycerol 1-phosphate + H(+). The protein operates within protein modification; lipoprotein biosynthesis (diacylglyceryl transfer). Catalyzes the transfer of the diacylglyceryl group from phosphatidylglycerol to the sulfhydryl group of the N-terminal cysteine of a prolipoprotein, the first step in the formation of mature lipoproteins. This chain is Phosphatidylglycerol--prolipoprotein diacylglyceryl transferase, found in Trichormus variabilis (strain ATCC 29413 / PCC 7937) (Anabaena variabilis).